A 47-amino-acid chain; its full sequence is Large ribosomal subunit protein bL34 (47 aa).

Residues 1-47 form a disordered region; the sequence is MVTEGLKPHISIKKKKRKSGFLARMRTKSGRKIIARRRRKGRKRLAP. The segment covering 10–47 has biased composition (basic residues); sequence ISIKKKKRKSGFLARMRTKSGRKIIARRRRKGRKRLAP.

Belongs to the bacterial ribosomal protein bL34 family.

The chain is Large ribosomal subunit protein bL34 (rpmH) from Aquifex aeolicus (strain VF5).